The chain runs to 181 residues: MTTNTIAQIQASIKSIPDYPKPGILFRDVTSLLEDAQAYQATIQLLVDKYKDMGFTKVVGTEARGFLFGAPLALQLGVGFVPVRKPGKLPRNTIAQSYELEYGVDTLEIHTDAIVEGDKVLVVDDLLATGGTIEATTKLIRQLGGVVEHAAFVINLPEIGGDKRLEGLGLNVYSICEFEGH.

Belongs to the purine/pyrimidine phosphoribosyltransferase family. As to quaternary structure, homodimer.

It localises to the cytoplasm. The enzyme catalyses AMP + diphosphate = 5-phospho-alpha-D-ribose 1-diphosphate + adenine. It functions in the pathway purine metabolism; AMP biosynthesis via salvage pathway; AMP from adenine: step 1/1. Its function is as follows. Catalyzes a salvage reaction resulting in the formation of AMP, that is energically less costly than de novo synthesis. The sequence is that of Adenine phosphoribosyltransferase from Vibrio vulnificus (strain CMCP6).